The chain runs to 545 residues: Ribulokinase (545 aa).

The protein belongs to the ribulokinase family.

It catalyses the reaction D-ribulose + ATP = D-ribulose 5-phosphate + ADP + H(+). The catalysed reaction is L-ribulose + ATP = L-ribulose 5-phosphate + ADP + H(+). The protein operates within carbohydrate degradation; L-arabinose degradation via L-ribulose; D-xylulose 5-phosphate from L-arabinose (bacterial route): step 2/3. The polypeptide is Ribulokinase (Staphylococcus aureus (strain Mu3 / ATCC 700698)).